A 233-amino-acid chain; its full sequence is Small ribosomal subunit protein uS3 (233 aa).

The region spanning 39–107 (VRQYLKKELA…PAQINISEVR (69 aa)) is the KH type-2 domain.

Belongs to the universal ribosomal protein uS3 family. In terms of assembly, part of the 30S ribosomal subunit. Forms a tight complex with proteins S10 and S14.

Functionally, binds the lower part of the 30S subunit head. Binds mRNA in the 70S ribosome, positioning it for translation. The chain is Small ribosomal subunit protein uS3 from Photorhabdus laumondii subsp. laumondii (strain DSM 15139 / CIP 105565 / TT01) (Photorhabdus luminescens subsp. laumondii).